The following is a 395-amino-acid chain: Multidrug resistance protein MdtL (395 aa).

12 helical membrane passes run 4–24 (FLLC…MYLV), 42–62 (IAFS…GKIA), 69–89 (PVAI…SRAS), 93–113 (LFLS…VVAF), 131–151 (LLNG…HLIM), 158–178 (SLFY…LFIL), 217–237 (VSVI…VMGF), 247–267 (ALTA…LGLF), 271–291 (TLML…SLAH), 295–315 (VTLF…GVAM), 333–353 (LGIA…ILGI), and 358–378 (MLIG…FSVA).

It belongs to the major facilitator superfamily. DHA1 family. MdtL (TC 2.A.1.2.22) subfamily.

The protein localises to the cell inner membrane. The chain is Multidrug resistance protein MdtL from Salmonella heidelberg (strain SL476).